The sequence spans 438 residues: Dolichyl-diphosphooligosaccharide--protein glycosyltransferase 48 kDa subunit (438 aa).

Positions 1–25 (MASLRLSVLLVSVSWLLLLVSGLRA) are cleaved as a signal peptide. The Lumenal segment spans residues 26–408 (GPRTLVLMEN…QYERFIPSAY (383 aa)). The helical transmembrane segment at 409-429 (PYYASAFSVMFGLFIFSIVFL) threads the bilayer. The Cytoplasmic portion of the chain corresponds to 430–438 (HMKEKEKSD).

This sequence belongs to the DDOST 48 kDa subunit family. Component of the oligosaccharyltransferase (OST) complex.

Its subcellular location is the endoplasmic reticulum membrane. It functions in the pathway protein modification; protein glycosylation. In terms of biological role, subunit of the oligosaccharyl transferase (OST) complex that catalyzes the initial transfer of a defined glycan (Glc(3)Man(9)GlcNAc(2) in eukaryotes) from the lipid carrier dolichol-pyrophosphate to an asparagine residue within an Asn-X-Ser/Thr consensus motif in nascent polypeptide chains, the first step in protein N-glycosylation. N-glycosylation occurs cotranslationally and the complex associates with the Sec61 complex at the channel-forming translocon complex that mediates protein translocation across the endoplasmic reticulum (ER). All subunits are required for a maximal enzyme activity. Required for the assembly of both SST3A- and SS3B-containing OST complexes. In Xenopus laevis (African clawed frog), this protein is Dolichyl-diphosphooligosaccharide--protein glycosyltransferase 48 kDa subunit.